The sequence spans 438 residues: Indole diterpene prenyltransferase paxD (438 aa).

Residue 80–81 coordinates L-tryptophan; that stretch reads FM. Substrate is bound by residues Arg-102, Lys-190, Arg-264, Lys-266, Tyr-268, Tyr-349, and Tyr-418.

It belongs to the tryptophan dimethylallyltransferase family.

The protein operates within secondary metabolite biosynthesis. In terms of biological role, indole diterpene prenyltransferase; part of the gene cluster that mediates the biosynthesis of paxilline, a mycotoxin that acts as an inhibitor of mammalian maxi-K channels. PaxG, the geranylgeranyl diphosphate (GGPP) synthase is proposed to catalyze the first step in paxilline biosynthesis. Condensation of indole-3-glycerol phosphate with GGPP by paxC then forms 3-geranylgeranylindole (3-GGI), followed by epoxidation and cyclization of this intermediate (by paxM and paxB) to form paspaline. Paspaline is subsequently converted to 13-desoxypaxilline by paxP, the latter being then converted to paxilline by paxQ. Finally paxilline can be mono- and di-prenylated by paxD. In Penicillium paxilli, this protein is Indole diterpene prenyltransferase paxD.